A 65-amino-acid polypeptide reads, in one-letter code: pH-response transcription factor pacC/RIM101 (65 aa).

The C2H2-type 1 zinc finger occupies 16–40 (LTCQWNSCRTTTVKRDHITSHIRVH). A C2H2-type 2; degenerate zinc finger spans residues 46-65 (HKCEFCGKSFKRPQDLKKHV).

It belongs to the pacC/RIM101 family.

It is found in the nucleus. Transcription factor that mediates regulation of both acid- and alkaline-expressed genes in response to ambient pH. At alkaline ambient pH, activates transcription of alkaline-expressed genes (including pac1 itself) and represses transcription of acid-expressed genes. This Colletotrichum gloeosporioides (Anthracnose fungus) protein is pH-response transcription factor pacC/RIM101 (pac1).